The chain runs to 341 residues: Phosphate acyltransferase (341 aa).

This sequence belongs to the PlsX family. As to quaternary structure, homodimer. Probably interacts with PlsY.

Its subcellular location is the cytoplasm. It carries out the reaction a fatty acyl-[ACP] + phosphate = an acyl phosphate + holo-[ACP]. Its pathway is lipid metabolism; phospholipid metabolism. Functionally, catalyzes the reversible formation of acyl-phosphate (acyl-PO(4)) from acyl-[acyl-carrier-protein] (acyl-ACP). This enzyme utilizes acyl-ACP as fatty acyl donor, but not acyl-CoA. This Vibrio vulnificus (strain CMCP6) protein is Phosphate acyltransferase.